A 498-amino-acid polypeptide reads, in one-letter code: MIELRNLSYTYGTAEEPSLKNINLKVKKGELLLVTGHSAAGKTTLALAMAGILHHEIGGKIEGNLSFKNRDIKEFDGIKELSRHTGMVFDDAESQLIFTTVEEEILSGLENRGYSGKEIQRRLNEVMELCEIGHLKERAPHTLSGGQKQKVALAATLALDTEVLILDEATAELDTEAVRKVFSVLKRLKEAEKTIIIVDHNIEDFLEIGDRVVLLEKGEIKAIKSPADFAAVSEDTDLTSKSSKKEYSCSQKERQPVISIKNLTQRYGEFNALDNLDLEIRSGELVAILGENGSGKTTLVKHLNGLLRPYSGNVSVKGLNTSLTPVNELVKHTGLVFQNPDNMLFEDTVEAEVAFGLNNIGITGSEAGDAIARSLELVNLKGKEKVFPRHLSRGERQRLAVACVIAMRPELIILDEPTTGLDAEESDRMMQLMKRLQLEGHTILMVTHNMQIVKDHAERVIRMASGKIVEDSANGACNSFKRNIKCVEEKCAEGGAIV.

ABC transporter domains follow at residues 2-242 (IELR…TSKS) and 258-490 (ISIK…VEEK). Residues 36-43 (GHSAAGKT) and 290-297 (GENGSGKT) each bind ATP.

The protein belongs to the ABC transporter superfamily.

The protein localises to the cell membrane. Probably part of an ABC transporter complex. Responsible for energy coupling to the transport system. The protein is Putative ABC transporter ATP-binding protein MM_2387 of Methanosarcina mazei (strain ATCC BAA-159 / DSM 3647 / Goe1 / Go1 / JCM 11833 / OCM 88) (Methanosarcina frisia).